A 354-amino-acid chain; its full sequence is Peptide chain release factor 1 (354 aa).

Glutamine 233 carries the N5-methylglutamine modification.

Belongs to the prokaryotic/mitochondrial release factor family. Methylated by PrmC. Methylation increases the termination efficiency of RF1.

Its subcellular location is the cytoplasm. Functionally, peptide chain release factor 1 directs the termination of translation in response to the peptide chain termination codons UAG and UAA. This chain is Peptide chain release factor 1, found in Clostridioides difficile (strain 630) (Peptoclostridium difficile).